We begin with the raw amino-acid sequence, 377 residues long: N-acetyldiaminopimelate deacetylase (377 aa).

Residue aspartate 70 is part of the active site. Glutamate 129 serves as the catalytic Proton acceptor.

This sequence belongs to the peptidase M20A family. N-acetyldiaminopimelate deacetylase subfamily.

It catalyses the reaction N-acetyl-(2S,6S)-2,6-diaminopimelate + H2O = (2S,6S)-2,6-diaminopimelate + acetate. It participates in amino-acid biosynthesis; L-lysine biosynthesis via DAP pathway; LL-2,6-diaminopimelate from (S)-tetrahydrodipicolinate (acetylase route): step 3/3. In terms of biological role, catalyzes the conversion of N-acetyl-diaminopimelate to diaminopimelate and acetate. This chain is N-acetyldiaminopimelate deacetylase, found in Streptococcus thermophilus (strain CNRZ 1066).